Here is a 409-residue protein sequence, read N- to C-terminus: NADH-quinone oxidoreductase subunit D (409 aa).

The protein belongs to the complex I 49 kDa subunit family. As to quaternary structure, NDH-1 is composed of 14 different subunits. Subunits NuoB, C, D, E, F, and G constitute the peripheral sector of the complex.

The protein localises to the cell inner membrane. The enzyme catalyses a quinone + NADH + 5 H(+)(in) = a quinol + NAD(+) + 4 H(+)(out). In terms of biological role, NDH-1 shuttles electrons from NADH, via FMN and iron-sulfur (Fe-S) centers, to quinones in the respiratory chain. The immediate electron acceptor for the enzyme in this species is believed to be ubiquinone. Couples the redox reaction to proton translocation (for every two electrons transferred, four hydrogen ions are translocated across the cytoplasmic membrane), and thus conserves the redox energy in a proton gradient. The polypeptide is NADH-quinone oxidoreductase subunit D (Helicobacter pylori (strain P12)).